The chain runs to 258 residues: Synapse differentiation-inducing gene protein 1 (258 aa).

Over 1-181 the chain is Cytoplasmic; the sequence is MDGIIEQKSM…NFLMMPPRDH (181 aa). At S137 the chain carries Phosphoserine. Residues 182 to 202 traverse the membrane as a helical segment; that stretch reads LGLSVFSMLCCFWPLGIAAFY. The Extracellular segment spans residues 203–228; sequence LSHETNKAVAKGDLHQASTSSRRALF. Positions 229-249 form an intramembrane region, helical; that stretch reads LAVLSITIGTGVYVGVAVALI. Over 250 to 258 the chain is Extracellular; it reads AYLSKNNHL.

It belongs to the CD225/Dispanin family. In terms of assembly, homodimer. Interacts with GRIA1 and GRIA2.

It is found in the cell membrane. It localises to the early endosome membrane. The protein resides in the postsynaptic density membrane. Its subcellular location is the synapse. The protein localises to the cell projection. It is found in the dendrite. It localises to the dendritic spine. In terms of biological role, may regulate AMPA receptor content at nascent synapses, and have a role in postsynaptic development and maturation. This is Synapse differentiation-inducing gene protein 1 (SYNDIG1) from Macaca fascicularis (Crab-eating macaque).